A 340-amino-acid polypeptide reads, in one-letter code: Anthranilate phosphoribosyltransferase (340 aa).

Residues Gly-80, 83–84 (GD), Thr-88, 90–93 (NIST), 108–116 (KHGNRAMSS), and Ser-120 contribute to the 5-phospho-alpha-D-ribose 1-diphosphate site. Gly-80 provides a ligand contact to anthranilate. Residue Ser-92 participates in Mg(2+) binding. Residue Asn-111 participates in anthranilate binding. Arg-166 is a binding site for anthranilate. Positions 225 and 226 each coordinate Mg(2+).

The protein belongs to the anthranilate phosphoribosyltransferase family. As to quaternary structure, homodimer. It depends on Mg(2+) as a cofactor.

The catalysed reaction is N-(5-phospho-beta-D-ribosyl)anthranilate + diphosphate = 5-phospho-alpha-D-ribose 1-diphosphate + anthranilate. The protein operates within amino-acid biosynthesis; L-tryptophan biosynthesis; L-tryptophan from chorismate: step 2/5. Catalyzes the transfer of the phosphoribosyl group of 5-phosphorylribose-1-pyrophosphate (PRPP) to anthranilate to yield N-(5'-phosphoribosyl)-anthranilate (PRA). The protein is Anthranilate phosphoribosyltransferase of Chloroflexus aggregans (strain MD-66 / DSM 9485).